Reading from the N-terminus, the 253-residue chain is Phosphate import ATP-binding protein PstB (253 aa).

Residues 5–248 form the ABC transporter domain; the sequence is IETVNLNVYY…PEHELTEKYV (244 aa). ATP is bound at residue 37 to 44; that stretch reads GPSGCGKS.

The protein belongs to the ABC transporter superfamily. Phosphate importer (TC 3.A.1.7) family. In terms of assembly, the complex is composed of two ATP-binding proteins (PstB), two transmembrane proteins (PstC and PstA) and a solute-binding protein (PstS).

It localises to the cell membrane. The enzyme catalyses phosphate(out) + ATP + H2O = ADP + 2 phosphate(in) + H(+). Functionally, part of the ABC transporter complex PstSACB involved in phosphate import. Responsible for energy coupling to the transport system. The polypeptide is Phosphate import ATP-binding protein PstB (Thermococcus kodakarensis (strain ATCC BAA-918 / JCM 12380 / KOD1) (Pyrococcus kodakaraensis (strain KOD1))).